A 483-amino-acid polypeptide reads, in one-letter code: Glutamyl-tRNA(Gln) amidotransferase subunit A (483 aa).

Residues Lys-76 and Ser-151 each act as charge relay system in the active site. Catalysis depends on Ser-175, which acts as the Acyl-ester intermediate.

It belongs to the amidase family. GatA subfamily. As to quaternary structure, heterotrimer of A, B and C subunits.

The enzyme catalyses L-glutamyl-tRNA(Gln) + L-glutamine + ATP + H2O = L-glutaminyl-tRNA(Gln) + L-glutamate + ADP + phosphate + H(+). Functionally, allows the formation of correctly charged Gln-tRNA(Gln) through the transamidation of misacylated Glu-tRNA(Gln) in organisms which lack glutaminyl-tRNA synthetase. The reaction takes place in the presence of glutamine and ATP through an activated gamma-phospho-Glu-tRNA(Gln). The protein is Glutamyl-tRNA(Gln) amidotransferase subunit A of Coxiella burnetii (strain CbuK_Q154) (Coxiella burnetii (strain Q154)).